A 399-amino-acid chain; its full sequence is Argininosuccinate synthase (399 aa).

Residues 10–18 (AYSGGVDTS) and Ala38 contribute to the ATP site. Position 89 (Tyr89) interacts with L-citrulline. Gly119 provides a ligand contact to ATP. The L-aspartate site is built by Thr121, Asn125, and Asp126. Asn125 contributes to the L-citrulline binding site. Residues Arg129, Ser177, Ser186, Glu262, and Tyr274 each contribute to the L-citrulline site.

This sequence belongs to the argininosuccinate synthase family. Type 1 subfamily. As to quaternary structure, homotetramer.

It localises to the cytoplasm. The catalysed reaction is L-citrulline + L-aspartate + ATP = 2-(N(omega)-L-arginino)succinate + AMP + diphosphate + H(+). Its pathway is amino-acid biosynthesis; L-arginine biosynthesis; L-arginine from L-ornithine and carbamoyl phosphate: step 2/3. This is Argininosuccinate synthase from Acaryochloris marina (strain MBIC 11017).